The following is a 276-amino-acid chain: Palmitoyltransferase ZDHHC22 (276 aa).

Topologically, residues 1 to 9 are cytoplasmic; sequence MGKLKLLNT. A helical membrane pass occupies residues 10-30; the sequence is IAPAYFYAATVVTFALHFLLF. Topologically, residues 31-45 are lumenal; that stretch reads TPTIFQSSDVTINPA. A helical transmembrane segment spans residues 46–66; that stretch reads MLAHISIFLFLMGNALGNYIM. Residues 67–131 lie on the Cytoplasmic side of the membrane; it reads TIRNPSESAN…NCIGNRNMRY (65 aa). The 37-residue stretch at 101-137 folds into the DHHC domain; it reads HFCKVCKKVILKRDHHCFFTGNCIGNRNMRYFIMFSI. Residue Cys-117 is the S-palmitoyl cysteine intermediate of the active site. A helical transmembrane segment spans residues 132–152; that stretch reads FIMFSIYTSSSCLYSLVIGVA. Residues 153 to 165 lie on the Lumenal side of the membrane; sequence YLTIEYSISFENP. Residues 166 to 186 form a helical membrane-spanning segment; that stretch reads LTFLTLLPLSTGYFFLGLISG. Residues 187 to 188 lie on the Cytoplasmic side of the membrane; that stretch reads LQ. A helical transmembrane segment spans residues 189 to 209; sequence FFLVIMLYIWLGIGLVSVGFC. Topologically, residues 210-276 are lumenal; it reads CQQLLLVARG…WQVYHDHKHD (67 aa).

Belongs to the DHHC palmitoyltransferase family.

The protein localises to the endoplasmic reticulum membrane. The protein resides in the golgi apparatus membrane. The enzyme catalyses L-cysteinyl-[protein] + hexadecanoyl-CoA = S-hexadecanoyl-L-cysteinyl-[protein] + CoA. In terms of biological role, palmitoyltransferase that could catalyze the addition of palmitate onto various protein substrates and be involved in a variety of cellular processes. This chain is Palmitoyltransferase ZDHHC22 (zdhhc22), found in Danio rerio (Zebrafish).